Here is a 903-residue protein sequence, read N- to C-terminus: Protein translocase subunit SecA (903 aa).

ATP contacts are provided by residues glutamine 89, 107–111 (GEGKT), and aspartate 502. Residues cysteine 886, cysteine 888, cysteine 897, and histidine 898 each contribute to the Zn(2+) site.

Belongs to the SecA family. Monomer and homodimer. Part of the essential Sec protein translocation apparatus which comprises SecA, SecYEG and auxiliary proteins SecDF-YajC and YidC. Requires Zn(2+) as cofactor.

The protein resides in the cell inner membrane. The protein localises to the cytoplasm. The enzyme catalyses ATP + H2O + cellular proteinSide 1 = ADP + phosphate + cellular proteinSide 2.. Its function is as follows. Part of the Sec protein translocase complex. Interacts with the SecYEG preprotein conducting channel. Has a central role in coupling the hydrolysis of ATP to the transfer of proteins into and across the cell membrane, serving both as a receptor for the preprotein-SecB complex and as an ATP-driven molecular motor driving the stepwise translocation of polypeptide chains across the membrane. The chain is Protein translocase subunit SecA from Sinorhizobium medicae (strain WSM419) (Ensifer medicae).